The sequence spans 584 residues: Arginine--tRNA ligase (584 aa).

Residues Pro126–His136 carry the 'HIGH' region motif.

The protein belongs to the class-I aminoacyl-tRNA synthetase family. In terms of assembly, monomer.

It is found in the cytoplasm. The enzyme catalyses tRNA(Arg) + L-arginine + ATP = L-arginyl-tRNA(Arg) + AMP + diphosphate. This is Arginine--tRNA ligase (argS) from Synechocystis sp. (strain ATCC 27184 / PCC 6803 / Kazusa).